A 575-amino-acid polypeptide reads, in one-letter code: Malto-oligosyltrehalose trehalohydrolase (575 aa).

Position 248 to 253 (248 to 253) interacts with substrate; sequence RLDAVH. The Nucleophile role is filled by aspartate 250. Catalysis depends on glutamate 287, which acts as the Proton donor. Substrate is bound by residues 312–316 and 381–386; these read DDVHH and HDQVGN.

Belongs to the glycosyl hydrolase 13 family.

It localises to the cytoplasm. It carries out the reaction hydrolysis of (1-&gt;4)-alpha-D-glucosidic linkage in 4-alpha-D-[(1-&gt;4)-alpha-D-glucanosyl]n trehalose to yield trehalose and (1-&gt;4)-alpha-D-glucan.. The protein operates within glycan biosynthesis; trehalose biosynthesis. The polypeptide is Malto-oligosyltrehalose trehalohydrolase (treZ) (Arthrobacter ramosus).